A 757-amino-acid polypeptide reads, in one-letter code: Transmembrane channel-like protein 1 (757 aa).

The interval 1-74 is disordered; that stretch reads MLQIQVEEKE…RRRLRRGAEE (74 aa). Over 1 to 176 the chain is Cytoplasmic; it reads MLQIQVEEKE…KIKAIESQFG (176 aa). A compositionally biased stretch (acidic residues) spans 8 to 23; the sequence is EKEEDTEESSSEEEED. S30 is subject to Phosphoserine. Phosphothreonine is present on T38. The span at 43–54 shows a compositional bias: acidic residues; it reads NEDDPEPEPEDE. The segment at 81-130 is required for interaction with CIB2; that stretch reads EELERLKALLDENRQMIATVKCKPWKMEKKIEVLKEAKKFVSENEGALGK. S122 bears the Phosphoserine mark. Residues 177–214 traverse the membrane as a helical segment; that stretch reads SSVASYFLFLRWMYGVNMVLFVLTFSLIMLPEYLWGLP. Over 215–265 the chain is Extracellular; it reads YGSLPRKTVPRAEEASAANFGVLYDFNGLAQYSVLFYGYYDNKRTIGWLNF. A helical transmembrane segment spans residues 266–297; that stretch reads RLPLSYFLVGIMCIGYSFLVVLKAMTKNIGDD. The required for interaction with CIB2 stretch occupies residues 298–352; it reads GGGDDNTFNFSWKVFCSWDYLIGNPETADNKFNSITMNFKEAIIEERAAQVEENI. Over 298 to 353 the chain is Cytoplasmic; that stretch reads GGGDDNTFNFSWKVFCSWDYLIGNPETADNKFNSITMNFKEAIIEERAAQVEENIH. A Phosphoserine modification is found at S308. The helical transmembrane segment at 354–384 threads the bilayer; it reads LIRFLRFLANFFVFLTLGASGYLIFWAVKRS. The Extracellular segment spans residues 385–396; it reads QEFAQQDPDTLG. Phosphothreonine is present on T394. Residues 397–424 form a helical membrane-spanning segment; the sequence is WWEKNEMNMVMSLLGMFCPTLFDLFAEL. The Cytoplasmic segment spans residues 425-428; that stretch reads EDYH. The helical transmembrane segment at 429–463 threads the bilayer; it reads PLIALKWLLGRIFALLLGNLYVFILALMDEINNKI. Topologically, residues 464-512 are extracellular; sequence EEEKLVKANITLWEANMIKAYNESLSGLSGNTTGAPFFVHPADVPRGPC. A helical membrane pass occupies residues 513 to 550; it reads WETMVGQEFVRLTVSDVLTTYVTILIGDFLRACFVRFC. Over 551–569 the chain is Cytoplasmic; the sequence is NYCWCWDLEYGYPSYTEFD. The chain crosses the membrane as a helical span at residues 570 to 590; that stretch reads ISGNVLALIFNQGMIWMGSFF. Topologically, residues 591–593 are extracellular; that stretch reads APS. A helical transmembrane segment spans residues 594–616; it reads LPGINILRLHTSMYFQCWAVMCC. Over 617–630 the chain is Cytoplasmic; sequence NVPEARVFKASRSN. The chain crosses the membrane as a helical span at residues 631–654; that stretch reads NFYLGMLLLILFLSTMPVLYMIVS. The Extracellular segment spans residues 655–697; it reads LPPSFDCGPFSGKNRMFEVIGETLEHDFPSWMAKILRQLSNPG. Residues 698-731 form a helical membrane-spanning segment; that stretch reads LVIAVILVMVLTIYYLNATAKGQKAANLDLKKKM. Over 732–757 the chain is Cytoplasmic; it reads KQQALENKMRNKKMAAARAAAAAGGQ.

The protein belongs to the TMC family. In terms of assembly, forms the MET channel composed of TMC dimer (TMC1 or TMC2), TMIE, TOMT, CIB (CIB2 or CIB3), LHFPL5 and PCDH15. Interacts with PIEZO1 and PIEZO2; the interaction may be part of the MET complex. The interaction of TMC1 and TMC2 with TOMT is required for the transportation of TMC1/2 into the stereocilia of hair cells. Interacts (via N-terminus) with both isoforms CD1 and CD3 of PCDH15. Can form a heterodimer with TMC2, TMC5 or TMC7. In terms of tissue distribution, detected in cochlear inner and outer hair cells and in neurosensory epithelia of the vestibular end organs. Also expressed in cortex, cerebellum, eye, colon, ovary and testis.

Its subcellular location is the cell membrane. The catalysed reaction is Ca(2+)(in) = Ca(2+)(out). In terms of biological role, pore-forming subunit of the mechanotransducer (MET) non-selective cation channel complex located at the tips of stereocilia of cochlear hair cells and that mediates sensory transduction in the auditory system. The MET complex is composed of two dimeric pore-forming ion-conducting transmembrane TMC (TMC1 or TMC2) subunits, several auxiliary proteins including LHFPL5, TMIE, CIB2/3 and TOMT, the tip-link PCDH15, and possibly the PIEZO subunits. MET channel is activated by tension in the tip-link extending from the side wall of one stereocilium to the tip of the adjacent shorter stereocilium, where the channel is located. TMC1 MET channel is highly permeable to calcium and likely transports monovalent cations. Also involved in vestibular hair cells transduction current. This Mus musculus (Mouse) protein is Transmembrane channel-like protein 1.